Reading from the N-terminus, the 386-residue chain is 23S rRNA (uracil(747)-C(5))-methyltransferase RlmC (386 aa).

Residues Cys-7, Cys-15, Cys-18, and Cys-94 each coordinate [4Fe-4S] cluster. S-adenosyl-L-methionine is bound by residues Gln-219, Phe-248, Glu-269, and Asn-316. The Nucleophile role is filled by Cys-343.

Belongs to the class I-like SAM-binding methyltransferase superfamily. RNA M5U methyltransferase family. RlmC subfamily.

The enzyme catalyses uridine(747) in 23S rRNA + S-adenosyl-L-methionine = 5-methyluridine(747) in 23S rRNA + S-adenosyl-L-homocysteine + H(+). Catalyzes the formation of 5-methyl-uridine at position 747 (m5U747) in 23S rRNA. In Shewanella oneidensis (strain ATCC 700550 / JCM 31522 / CIP 106686 / LMG 19005 / NCIMB 14063 / MR-1), this protein is 23S rRNA (uracil(747)-C(5))-methyltransferase RlmC.